A 365-amino-acid chain; its full sequence is Alanine racemase (365 aa).

The active-site Proton acceptor; specific for D-alanine is the Lys36. An N6-(pyridoxal phosphate)lysine modification is found at Lys36. Arg132 is a substrate binding site. The active-site Proton acceptor; specific for L-alanine is the Tyr257. Substrate is bound at residue Met305.

The protein belongs to the alanine racemase family. The cofactor is pyridoxal 5'-phosphate.

It catalyses the reaction L-alanine = D-alanine. Its pathway is amino-acid biosynthesis; D-alanine biosynthesis; D-alanine from L-alanine: step 1/1. Its function is as follows. Catalyzes the interconversion of L-alanine and D-alanine. May also act on other amino acids. This is Alanine racemase (alr) from Xylella fastidiosa (strain Temecula1 / ATCC 700964).